A 943-amino-acid chain; its full sequence is Translation initiation factor IF-2 (943 aa).

Residues 35–359 (MSSIDQDQEA…MPQRKERPLP (325 aa)) are disordered. The span at 57–76 (KAPSSQAAKTPAKAAKTSSA) shows a compositional bias: low complexity. Basic and acidic residues-rich tracts occupy residues 92 to 103 (SNDHADAAEHSQ) and 110 to 124 (AKQENKPARSNKTSD). Residues 130–141 (SKSTILRPRSTQ) show a composition bias toward polar residues. Over residues 142 to 190 (TAHTNTNHNRGGNTASANNTANGRNSNRSNNNNNNRSANNANRSGNNNR) the composition is skewed to low complexity. 3 stretches are compositionally biased toward basic and acidic residues: residues 191 to 205 (SNERNRNDRNRRFDN), 239 to 250 (ASERQQPKRQEA), and 259 to 271 (KRSEQPRTERPRT). Composition is skewed to low complexity over residues 289-299 (PAAAAPKPASA) and 315-330 (NFGRSNSYGNRNGFNR). The span at 331–342 (NNRRNKKNKRRQ) shows a compositional bias: basic residues. Basic and acidic residues predominate over residues 346–358 (PKKEMPQRKERPL). Residues 444-613 (PRPPVVTIMG…LLEADVLELK (170 aa)) enclose the tr-type G domain. The interval 453-460 (GHVDHGKT) is G1. Residue 453–460 (GHVDHGKT) coordinates GTP. The G2 stretch occupies residues 478–482 (GITQH). The G3 stretch occupies residues 499 to 502 (DTPG). GTP is bound by residues 499-503 (DTPGH) and 553-556 (NKID). The interval 553–556 (NKID) is G4. The interval 589 to 591 (SAK) is G5.

It belongs to the TRAFAC class translation factor GTPase superfamily. Classic translation factor GTPase family. IF-2 subfamily.

It is found in the cytoplasm. In terms of biological role, one of the essential components for the initiation of protein synthesis. Protects formylmethionyl-tRNA from spontaneous hydrolysis and promotes its binding to the 30S ribosomal subunits. Also involved in the hydrolysis of GTP during the formation of the 70S ribosomal complex. The chain is Translation initiation factor IF-2 from Lacticaseibacillus paracasei (strain ATCC 334 / BCRC 17002 / CCUG 31169 / CIP 107868 / KCTC 3260 / NRRL B-441) (Lactobacillus paracasei).